A 471-amino-acid chain; its full sequence is Ankyrin repeat and death domain-containing protein 1A (471 aa).

10 ANK repeats span residues 19–48, 52–81, 85–114, 120–149, 153–182, 186–215, 219–248, 251–280, 284–313, and 317–346; these read VGRVALHWAAGAGHEQAVRLLLEHEAAVDE, FGMNALLLSAWFGHLRILQILVNSGAKIHC, DGLTLLHCAAQKGHVPVLAFIMEDLEDVAL, LGRTAFHRAAEHGQLDALDFLVGSGCDHSV, EGNTALHLAAGRGHMAVLQRLVDIGLDLEE, EGLTALHAAAGGTHPHCVRLLLRAGSTVNA, KNLSCLHYAALSGSEDVSRVLIHAGGCTNV, HGASPLHLAVMHNFPALVQLLINSDSDLNA, RQQTPLHLAAEHAWQDIAEMLLIAGVDLNL, and QGKTALAVAARSNHVSLVDMIIKADRFYKW. One can recognise a Death domain in the interval 379-467; it reads SVLWRLASRH…DLAELAVASV (89 aa).

In Macaca fascicularis (Crab-eating macaque), this protein is Ankyrin repeat and death domain-containing protein 1A (ANKDD1A).